The following is a 688-amino-acid chain: Complement C1s subcomponent (688 aa).

The signal sequence occupies residues 1–15 (MWCFVFFSLLASFSA). The 115-residue stretch at 16 to 130 (EPTMYGEILS…TGFAAYYSAV (115 aa)) folds into the CUB 1 domain. Ca(2+)-binding residues include Glu60, Asp68, Asp113, Asp131, Val132, and Glu134. The cysteines at positions 65 and 83 are disulfide-linked. In terms of domain architecture, EGF-like; calcium-binding spans 131–172 (DVNECTDFTDVPCSHFCNNFIGGYFCSCPPEYFLHDDMRTCG). Disulfide bonds link Cys135/Cys147, Cys143/Cys156, and Cys158/Cys171. Residues Asn149, Phe150, and Gly153 each coordinate Ca(2+). The residue at position 149 (Asn149) is a (3R)-3-hydroxyasparagine. N-linked (GlcNAc...) asparagine glycosylation is present at Asn174. Cys175 and Cys202 form a disulfide bridge. Residues 175 to 290 (CSGDVFTALI…KGWKLRYHGD (116 aa)) form the CUB 2 domain. Residues Glu226, Asp236, Asp275, Gly278, and Gln279 each contribute to the Ca(2+) site. Cys234 and Cys251 are disulfide-bonded. 2 Sushi domains span residues 292–356 (IPCP…ECQP) and 357–423 (VDCG…KCIP). 7 disulfide bridges follow: Cys294–Cys341, Cys321–Cys354, Cys359–Cys403, Cys386–Cys421, Cys425–Cys549, Cys595–Cys618, and Cys627–Cys659. An N-linked (GlcNAc...) asparagine glycan is attached at Asn406. Residues 438 to 680 (IFGGYSTKIQ…YVDWILKTMQ (243 aa)) form the Peptidase S1 domain. Residues His475 and Asp529 each act as charge relay system in the active site. Ser631 serves as the catalytic Charge relay system.

The protein belongs to the peptidase S1 family. In terms of assembly, core component of the complement C1 complex, a calcium-dependent complex composed of 1 molecule of the C1Q subcomplex, 2 molecules of C1R and 2 molecules of C1S. The C1Q subcomplex is composed 18 subunits: 3 chains of C1QA, C1QB, and C1QC trimerize to form 6 collagen-like triple helices connected to six globular ligand-recognition modules. In terms of processing, cleaved and activated by C1R to generate Complement C1s subcomponent heavy and light chains. Post-translationally, the iron and 2-oxoglutarate dependent 3-hydroxylation of aspartate and asparagine is (R) stereospecific within EGF domains.

The protein resides in the secreted. Its subcellular location is the cell surface. It catalyses the reaction Cleavage of Arg-|-Ala bond in complement component C4 to form C4a and C4b, and Lys(or Arg)-|-Lys bond in complement component C2 to form C2a and C2b: the 'classical' pathway C3 convertase.. With respect to regulation, cleaved and activated by C1R. Immunoglobulin-binding promotes autoactivation of C1R, which results in the cleavage of the Arg-Ile bond in the catalytic domain. Inhibited by C1 inhibitor (SERPING1). In terms of biological role, component of the complement C1 complex, a multiprotein complex that initiates the classical pathway of the complement system, a cascade of proteins that leads to phagocytosis and breakdown of pathogens and signaling that strengthens the adaptive immune system. C1S is activated following association of the C1 complex with immunoglobulins (IgG or IgM) complexed with antigens to form antigen-antibody complexes on the surface of pathogens. C1S is cleaved and activated by C1R to generate C1s subcomponent heavy and light chains. C1s subcomponent light chain then cleaves and activates C2 and C4, the next components of the classical complement pathway. Functionally, serine protease component of the complement C1 complex, which catalyzes cleavage and activation of C2 and C4, the next components of the classical complement pathway. Also cleaves IGFBP5 and thereby inhibits the trophic effects of IGF1. The sequence is that of Complement C1s subcomponent from Rattus norvegicus (Rat).